The primary structure comprises 341 residues: Ferrochelatase (341 aa).

Residues histidine 210 and glutamate 291 each coordinate Fe cation.

The protein belongs to the ferrochelatase family.

Its subcellular location is the cytoplasm. It catalyses the reaction heme b + 2 H(+) = protoporphyrin IX + Fe(2+). Its pathway is porphyrin-containing compound metabolism; protoheme biosynthesis; protoheme from protoporphyrin-IX: step 1/1. In terms of biological role, catalyzes the ferrous insertion into protoporphyrin IX. The chain is Ferrochelatase from Alcanivorax borkumensis (strain ATCC 700651 / DSM 11573 / NCIMB 13689 / SK2).